Here is a 308-residue protein sequence, read N- to C-terminus: MRKLVVGSRRSKLALTQSQQFIDKLKAVEPNLEIEIKEIVTKGDRIVDKQLSKVGGKGLFVKEIQHELFEKNIDMAIHSLKDVPSVIPEGLTLGCIPDRELPFDAYISKTHTPLSQLPEGSIIGTSSLRRGAQILSKYPNLEIKWIRGNIDTRLEKLQTEDYDAIILAAAGLRRMGWSDDIVTSYLDIDTLLPAIGQGALGIECRSDDEELLTLLSKVHNDEVAKCVTAERTFLAEMDGSCQVPIAGYATISDQKEIEFTGLIMTPDGKERFEYTMNGTDPVELGKKVSNKLKEQGAYEIIKRLNEQH.

C241 carries the S-(dipyrrolylmethanemethyl)cysteine modification.

Belongs to the HMBS family. In terms of assembly, monomer. Dipyrromethane is required as a cofactor.

It carries out the reaction 4 porphobilinogen + H2O = hydroxymethylbilane + 4 NH4(+). The protein operates within porphyrin-containing compound metabolism; protoporphyrin-IX biosynthesis; coproporphyrinogen-III from 5-aminolevulinate: step 2/4. Its function is as follows. Tetrapolymerization of the monopyrrole PBG into the hydroxymethylbilane pre-uroporphyrinogen in several discrete steps. This chain is Porphobilinogen deaminase, found in Staphylococcus aureus (strain bovine RF122 / ET3-1).